Here is a 155-residue protein sequence, read N- to C-terminus: RING finger protein 122 (155 aa).

Residues 40 to 60 traverse the membrane as a helical segment; that stretch reads VIFGTGIFVFMLSLIFCCYFI. The segment at 93 to 134 adopts an RING-type; atypical zinc-finger fold; it reads CAVCLEDFKGKDELGVLPCQHAFHRKCLVKWLEVRCVCPMCN.

It localises to the golgi apparatus. Its subcellular location is the endoplasmic reticulum. It is found in the membrane. May induce necrosis and apoptosis. May play a role in cell viability. The chain is RING finger protein 122 (Rnf122) from Mus musculus (Mouse).